We begin with the raw amino-acid sequence, 1026 residues long: Multidrug resistance protein MdtC (1026 aa).

Helical transmembrane passes span 15 to 35 (ILIA…LPVA), 333 to 353 (EVEE…FLFL), 360 to 380 (LIPA…MYLC), 387 to 407 (LSLM…IVVL), 431 to 451 (VGFT…PLLL), 463 to 483 (FAVT…TLTP), 528 to 548 (LVGV…IAIP), 853 to 873 (LILI…LYES), 897 to 917 (LFNA…IGIV), 953 to 973 (PIMM…LSGG), and 984 to 1004 (ITIV…TPVV).

The protein belongs to the resistance-nodulation-cell division (RND) (TC 2.A.6) family. MdtC subfamily. In terms of assembly, part of a tripartite efflux system composed of MdtA, MdtB and MdtC. MdtC forms a heteromultimer with MdtB.

The protein localises to the cell inner membrane. This Salmonella schwarzengrund (strain CVM19633) protein is Multidrug resistance protein MdtC.